A 162-amino-acid chain; its full sequence is Transcription elongation factor GreA (162 aa).

Residues 45–65 (NAEYHAAKERQLFIEARINEL) adopt a coiled-coil conformation.

Belongs to the GreA/GreB family.

In terms of biological role, necessary for efficient RNA polymerase transcription elongation past template-encoded arresting sites. The arresting sites in DNA have the property of trapping a certain fraction of elongating RNA polymerases that pass through, resulting in locked ternary complexes. Cleavage of the nascent transcript by cleavage factors such as GreA or GreB allows the resumption of elongation from the new 3'terminus. GreA releases sequences of 2 to 3 nucleotides. In Wolinella succinogenes (strain ATCC 29543 / DSM 1740 / CCUG 13145 / JCM 31913 / LMG 7466 / NCTC 11488 / FDC 602W) (Vibrio succinogenes), this protein is Transcription elongation factor GreA.